A 219-amino-acid polypeptide reads, in one-letter code: Probable nicotinate-nucleotide adenylyltransferase (219 aa).

The protein belongs to the NadD family.

The enzyme catalyses nicotinate beta-D-ribonucleotide + ATP + H(+) = deamido-NAD(+) + diphosphate. The protein operates within cofactor biosynthesis; NAD(+) biosynthesis; deamido-NAD(+) from nicotinate D-ribonucleotide: step 1/1. Functionally, catalyzes the reversible adenylation of nicotinate mononucleotide (NaMN) to nicotinic acid adenine dinucleotide (NaAD). This is Probable nicotinate-nucleotide adenylyltransferase from Cronobacter sakazakii (strain ATCC BAA-894) (Enterobacter sakazakii).